The chain runs to 807 residues: Serine/threonine-protein kinase B-raf (807 aa).

Low complexity-rich tracts occupy residues 1 to 15 and 110 to 128; these read MAAL…GASL and SVSS…SSSL. Disordered regions lie at residues 1-36 and 104-128; these read MAAL…YAGS and GNGT…SSSL. The RBD domain occupies 155–227; that stretch reads PIVRVFLPNK…TGEELHVEVL (73 aa). The Phorbol-ester/DAG-type zinc-finger motif lies at 234–280; that stretch reads THNFVRKTFFTLAFCDFCRKLLFQGFRCQTCGYKFHQRCSTEVPLMC. Residues His-235, Cys-248, Cys-251, Cys-261, Cys-264, His-269, Cys-272, and Cys-280 each contribute to the Zn(2+) site. The span at 303–313 shows a compositional bias: polar residues; it reads EETTLGETTPA. Disordered regions lie at residues 303 to 372 and 434 to 494; these read EETT…VHIN and STAG…EIPD. Residues 314–328 show a composition bias toward low complexity; it reads SGSYPSVPPSDSVGP. Composition is skewed to basic and acidic residues over residues 348-363 and 463-487; these read PADE…RDRS and QRER…RDSS. In terms of domain architecture, Protein kinase spans 497–757; the sequence is ITVGQRIGSG…PQILASIELL (261 aa). ATP contacts are provided by residues 503 to 511 and Lys-523; that span reads IGSGSFGTV. Residue Asp-616 is the Proton acceptor of the active site. At Ser-790 the chain carries Phosphoserine; by MAPK1. At Thr-793 the chain carries Phosphothreonine; by MAPK1.

Belongs to the protein kinase superfamily. TKL Ser/Thr protein kinase family. RAF subfamily. Zn(2+) serves as cofactor. Post-translationally, phosphorylated. In terms of tissue distribution, expressed preferentially in neural tissue.

Its subcellular location is the nucleus. The protein resides in the cytoplasm. It is found in the cell membrane. The enzyme catalyses L-seryl-[protein] + ATP = O-phospho-L-seryl-[protein] + ADP + H(+). It carries out the reaction L-threonyl-[protein] + ATP = O-phospho-L-threonyl-[protein] + ADP + H(+). With respect to regulation, in quiescent cells, maintained in an inactive state via an intramolecular interaction between the protein kinase and N-terminal domains. Following mitogen-mediated cell activation, binds via its RGB domain to active HRAS (GTP-bound) which releases the inhibitory intramolecular interaction between the two domains. This allows the MAP2K1-mediated dimerization of KSR1 or KSR2, and BRAF which activates BRAF. Protein kinase involved in the activation of the MAP signaling cascade. May play a role in transducing specific signals in neural cells. The sequence is that of Serine/threonine-protein kinase B-raf from Coturnix japonica (Japanese quail).